We begin with the raw amino-acid sequence, 640 residues long: Leucine-rich repeat-containing protein 4C (640 aa).

The signal sequence occupies residues 1–44; that stretch reads MLNKMTLHPQQIMIGPRFNRALFDPLLVVLLALQLLVVAGLVRA. The LRRNT domain maps to 45–76; the sequence is QTCPSVCSCSNQFSKVICVRKNLREVPDGIST. LRR repeat units follow at residues 77-98, 101-122, 125-146, 149-170, 173-195, 198-219, 220-241, 244-265, and 268-289; these read NTRLLNLHENQIQIIKVNSFKH, HLEILQLSRNHIRTIEIGAFNG, NLNTLELFDNRLTTIPNGAFVY, KLKELWLRNNPIESIPSYAFNR, SLRRLDLGELKRLSYISEGAFEG, NLRYLNLAMCNLREIPNLTPLI, KLDELDLSGNHLSAIRPGSFQG, HLQKLWMIQSQIQVIERNAFDN, and SLVEINLAHNNLTLLPHDLFTP. In terms of domain architecture, LRRCT spans 301–353; the sequence is NPWNCNCDILWLSWWIKDMAPSNTACCARCNTPPNLKGRYIGELDQNYFTCYA. Positions 354-442 constitute an Ig-like C2-type domain; it reads PVIVEPPADL…GNTTASATLN (89 aa). Residues Cys375 and Cys426 are joined by a disulfide bond. The segment at 463–483 is disordered; sequence EPSQDEARTTDNNVGPTPVVD. The helical transmembrane segment at 528–548 threads the bilayer; sequence IIIGCFVAITLMAAVMLVIFY. Ser631 bears the Phosphoserine mark.

Interacts with NTNG1 and WHRN. As to expression, highly expressed in the cerebral cortex, including frontal, parietal and occipital lobes. Putamen, amygdala, hippocampus and medulla oblongata show moderate expression. Caudate nucleus and thalamus express small amounts, whereas other brain regions show very weak or no expression.

It is found in the postsynaptic cell membrane. Its function is as follows. May promote neurite outgrowth of developing thalamic neurons. The protein is Leucine-rich repeat-containing protein 4C (LRRC4C) of Homo sapiens (Human).